The following is a 446-amino-acid chain: Exodeoxyribonuclease 7 large subunit (446 aa).

The protein belongs to the XseA family. In terms of assembly, heterooligomer composed of large and small subunits.

Its subcellular location is the cytoplasm. The enzyme catalyses Exonucleolytic cleavage in either 5'- to 3'- or 3'- to 5'-direction to yield nucleoside 5'-phosphates.. Bidirectionally degrades single-stranded DNA into large acid-insoluble oligonucleotides, which are then degraded further into small acid-soluble oligonucleotides. This chain is Exodeoxyribonuclease 7 large subunit, found in Streptococcus agalactiae serotype III (strain NEM316).